We begin with the raw amino-acid sequence, 349 residues long: Phenylalanine--tRNA ligase alpha subunit (349 aa).

Glutamate 258 contributes to the Mg(2+) binding site.

Belongs to the class-II aminoacyl-tRNA synthetase family. Phe-tRNA synthetase alpha subunit type 1 subfamily. As to quaternary structure, tetramer of two alpha and two beta subunits. The cofactor is Mg(2+).

The protein localises to the cytoplasm. It carries out the reaction tRNA(Phe) + L-phenylalanine + ATP = L-phenylalanyl-tRNA(Phe) + AMP + diphosphate + H(+). The polypeptide is Phenylalanine--tRNA ligase alpha subunit (Rickettsia felis (strain ATCC VR-1525 / URRWXCal2) (Rickettsia azadi)).